The sequence spans 156 residues: uncharacterized protein (156 aa).

This is an uncharacterized protein from Methanocaldococcus jannaschii (strain ATCC 43067 / DSM 2661 / JAL-1 / JCM 10045 / NBRC 100440) (Methanococcus jannaschii).